The chain runs to 63 residues: Kappa-theraphotoxin-Gr3a (63 aa).

A signal peptide spans 1-21; that stretch reads MKTSVFVLVLGLVLLFAVSFA. A propeptide spanning residues 22-29 is cleaved from the precursor; the sequence is TEMEESAR. Disulfide bonds link Cys31–Cys45, Cys38–Cys50, and Cys44–Cys57.

It belongs to the neurotoxin 10 (Hwtx-1) family. 63 (VsTx1) subfamily. As to expression, expressed by the venom gland.

Its subcellular location is the secreted. Functionally, inhibits sodium channels Nav1.7/SCN9A and potassium channels Kv11.1/KCNH2. Also binds the voltage-sensor domain of the potassium channel KvAP (from the archaeon Aeropyrum pernix) with very slow apparent binding kinetics and affects channel gating. Reaches its target by dynamically partitioning into anionic or zwitterionic headgroup lipid membranes. May bind to the open state of KvAP. This Grammostola rosea (Chilean rose tarantula) protein is Kappa-theraphotoxin-Gr3a.